We begin with the raw amino-acid sequence, 414 residues long: F-box protein At3g47030 (414 aa).

Positions 1 to 24 (MSGMLGLSAVMGKRPKQQVTARPR) are disordered. The F-box domain maps to 28–77 (IEKPEEIPDDLLIDVFSRLSIEDVARCRCLSRFWSSILRRRYFTELFHKM).

This chain is F-box protein At3g47030, found in Arabidopsis thaliana (Mouse-ear cress).